The following is a 153-amino-acid chain: Protein eva-1 homolog A (153 aa).

A helical membrane pass occupies residues 37 to 57 (ALYFVCGVCLGLVLTLIALVV). The segment at 66–97 (KTQQAPKKTGKTVENTSDTSDSDSDWDNTSDL) is disordered.

The protein belongs to the EVA1 family.

The protein resides in the endoplasmic reticulum membrane. It is found in the lysosome membrane. Acts as a regulator of programmed cell death, mediating both autophagy and apoptosis. The polypeptide is Protein eva-1 homolog A (Eva1a) (Danio rerio (Zebrafish)).